The primary structure comprises 176 residues: RNA pyrophosphohydrolase (176 aa).

One can recognise a Nudix hydrolase domain in the interval 6–149 (GYRPNVGIVI…KRDVYRRVMK (144 aa)). The short motif at 38–59 (GGINPGESPEQAMYRELFEEVG) is the Nudix box element.

This sequence belongs to the Nudix hydrolase family. RppH subfamily. A divalent metal cation serves as cofactor.

In terms of biological role, accelerates the degradation of transcripts by removing pyrophosphate from the 5'-end of triphosphorylated RNA, leading to a more labile monophosphorylated state that can stimulate subsequent ribonuclease cleavage. In Proteus mirabilis (strain HI4320), this protein is RNA pyrophosphohydrolase.